The chain runs to 461 residues: ATP-dependent protease ATPase subunit HslU (461 aa).

ATP is bound by residues Val-21, Gly-63–Glu-68, Asp-274, Glu-339, and Arg-411.

The protein belongs to the ClpX chaperone family. HslU subfamily. A double ring-shaped homohexamer of HslV is capped on each side by a ring-shaped HslU homohexamer. The assembly of the HslU/HslV complex is dependent on binding of ATP.

The protein localises to the cytoplasm. In terms of biological role, ATPase subunit of a proteasome-like degradation complex; this subunit has chaperone activity. The binding of ATP and its subsequent hydrolysis by HslU are essential for unfolding of protein substrates subsequently hydrolyzed by HslV. HslU recognizes the N-terminal part of its protein substrates and unfolds these before they are guided to HslV for hydrolysis. This chain is ATP-dependent protease ATPase subunit HslU, found in Caldanaerobacter subterraneus subsp. tengcongensis (strain DSM 15242 / JCM 11007 / NBRC 100824 / MB4) (Thermoanaerobacter tengcongensis).